Reading from the N-terminus, the 500-residue chain is NAD(P)H-quinone oxidoreductase chain 4, chloroplastic (500 aa).

The next 14 membrane-spanning stretches (helical) occupy residues 4–24, 35–55, 87–107, 113–130, 134–154, 167–187, 211–231, 242–262, 272–292, 305–325, 330–350, 386–406, 416–436, and 462–482; these read FPWLTIIVVFPISAGSLMLFL, YTICICILELLLTTYAFCYNF, IGTILLTGFITTLATLAAFPV, FFHFLMLAMYSGQIGSFS, LLLFFIMWELELIPVYLLLSM, FILYTAGSSIFLLIGVLGISL, ILFYIGFLIAFAVKSPIIPLH, HYSTCMLLAGILLKMGAYGLV, AHSMFSPWLLVVGTIQIIYAA, IAYSSVSHMGFIIIGISSITD, GAILQIISHGFIGAALFFLAG, LALPGMSGFIAEFIVFFGIIT, IFIIFVMAIGMILTPIYLLSM, and LFLSISILLPIIGIGIYPDFV.

The protein belongs to the complex I subunit 4 family.

The protein resides in the plastid. The protein localises to the chloroplast thylakoid membrane. It catalyses the reaction a plastoquinone + NADH + (n+1) H(+)(in) = a plastoquinol + NAD(+) + n H(+)(out). It carries out the reaction a plastoquinone + NADPH + (n+1) H(+)(in) = a plastoquinol + NADP(+) + n H(+)(out). This Arabidopsis thaliana (Mouse-ear cress) protein is NAD(P)H-quinone oxidoreductase chain 4, chloroplastic (ndhD).